The primary structure comprises 215 residues: Probable nicotinate-nucleotide adenylyltransferase (215 aa).

Belongs to the NadD family.

It carries out the reaction nicotinate beta-D-ribonucleotide + ATP + H(+) = deamido-NAD(+) + diphosphate. The protein operates within cofactor biosynthesis; NAD(+) biosynthesis; deamido-NAD(+) from nicotinate D-ribonucleotide: step 1/1. In terms of biological role, catalyzes the reversible adenylation of nicotinate mononucleotide (NaMN) to nicotinic acid adenine dinucleotide (NaAD). The sequence is that of Probable nicotinate-nucleotide adenylyltransferase from Shewanella sp. (strain W3-18-1).